Consider the following 196-residue polypeptide: Protein TEX261 (196 aa).

5 helical membrane-spanning segments follow: residues 3–23, 42–62, 70–90, 97–117, and 125–145; these read FMYL…TLAV, SRII…LYVF, IGVG…FPFI, FILS…FFAE, and VLAY…VSLS.

Belongs to the SVP26 family.

It localises to the membrane. This Pongo abelii (Sumatran orangutan) protein is Protein TEX261 (TEX261).